Consider the following 657-residue polypeptide: Cyclic-di-AMP phosphodiesterase PdeA (657 aa).

Helical transmembrane passes span 13 to 35 (PLYG…SWWL) and 37 to 53 (ALVV…MFYF). Residues 74–137 (RSEEEALVEM…ITGNDEKGIM (64 aa)) form a PAS-like region. The GGDEF domain maps to 175–303 (NKSVFAVIFL…GGDQVVIKQP (129 aa)). Residues 342-498 (VFVMGHRYPD…IEATALLSGI (157 aa)) are DHH. The Mn(2+) site is built by histidine 347, aspartate 351, aspartate 353, aspartate 422, histidine 446, and aspartate 501. Positions 592-645 (VITLRPDKLIGISARSLGQINVQVIMEKLGGGGHLSNAATQLKDVTIAEAEKQL) are DHHA1.

The protein belongs to the GdpP/PdeA phosphodiesterase family. The cofactor is heme b. Mn(2+) serves as cofactor.

It localises to the cell membrane. It carries out the reaction 3',3'-c-di-AMP + H2O = 5'-O-phosphonoadenylyl-(3'-&gt;5')-adenosine + H(+). Its function is as follows. Has phosphodiesterase (PDE) activity against cyclic-di-AMP (c-di-AMP). Overexpression decreases export of c-di-AMP, leads to slightly increased susceptibility to the antibiotic cefuroxime and somewhat slower growth in macrophages. There are at least 2 PDEs for c-di-AMP in this bacteria (this one and pgpH); this may be the major PDE for intracellular growth in host macrophages. During host infection c-di-AMP is secreted into the host cytoplasm which leads to interferon-beta production and secretion by the host. c-di-AMP is a second messenger that mediates growth, cell wall stability and virulence. May monitor cellular heme or NO levels. The polypeptide is Cyclic-di-AMP phosphodiesterase PdeA (Listeria monocytogenes serotype 1/2a (strain 10403S)).